We begin with the raw amino-acid sequence, 263 residues long: Putative aliphatic sulfonates transport permease protein SsuC (263 aa).

Residues 1–13 (MATPVKKWLLRVA) are Cytoplasmic-facing. A helical transmembrane segment spans residues 14–34 (PWFLPVGIVAVWQLASSVGWL). Residues 35-43 (STRILPSPE) lie on the Periplasmic side of the membrane. Residues 44-64 (GVVTAFWTLSASGELWQHLAI) form a helical membrane-spanning segment. One can recognise an ABC transmembrane type-1 domain in the interval 58-242 (LWQHLAISSW…LLGKLADVSA (185 aa)). Topologically, residues 65–68 (SSWR) are cytoplasmic. Residues 69–89 (ALIGFSIGGSLGLILGLISGL) traverse the membrane as a helical segment. The Periplasmic segment spans residues 90 to 102 (SRWGERLLDTSIQ). Residues 103 to 122 (MLRNVPHLALIPLVILWFGI) traverse the membrane as a helical segment. Over 123–125 (DES) the chain is Cytoplasmic. Residues 126–148 (AKIFLVALGTLFPIYINTWHGIR) form a helical membrane-spanning segment. Topologically, residues 149–164 (NIDRGLVEMARSYGLS) are periplasmic. The chain crosses the membrane as a helical span at residues 165–185 (GIPLFIHVILPGALPSIMVGV). The Cytoplasmic segment spans residues 186-187 (RF). Residues 188–208 (ALGLMWLTLIVAETISANSGI) form a helical membrane-spanning segment. The Periplasmic segment spans residues 209–217 (GYLAMNARE). The chain crosses the membrane as a helical span at residues 218 to 238 (FLQTDVVVVAIILYALLGKLA). The Cytoplasmic segment spans residues 239-263 (DVSAQLLERLWLRWNPAYHLKEATV).

This sequence belongs to the binding-protein-dependent transport system permease family. CysTW subfamily.

It localises to the cell inner membrane. Part of a binding-protein-dependent transport system for aliphatic sulfonates. Probably responsible for the translocation of the substrate across the membrane. This Escherichia coli (strain K12) protein is Putative aliphatic sulfonates transport permease protein SsuC (ssuC).